The primary structure comprises 328 residues: D-alanine--D-alanine ligase (328 aa).

Residues 118-317 enclose the ATP-grasp domain; the sequence is LSVLTKFNIP…MPQMLDNEIT (200 aa). 146-201 lines the ATP pocket; it reads KKALGLPFFVKPNQSGSSLGVSKVDALDQLEKALEFAFAEDNEILIESYLNGTEVS. The Mg(2+) site is built by Asp272, Glu284, and Asn286.

This sequence belongs to the D-alanine--D-alanine ligase family. The cofactor is Mg(2+). It depends on Mn(2+) as a cofactor.

The protein resides in the cytoplasm. The enzyme catalyses 2 D-alanine + ATP = D-alanyl-D-alanine + ADP + phosphate + H(+). Its pathway is cell wall biogenesis; peptidoglycan biosynthesis. Its function is as follows. Cell wall formation. The chain is D-alanine--D-alanine ligase from Flavobacterium psychrophilum (strain ATCC 49511 / DSM 21280 / CIP 103535 / JIP02/86).